The following is a 74-amino-acid chain: Large ribosomal subunit protein bL28 (74 aa).

This sequence belongs to the bacterial ribosomal protein bL28 family.

The protein is Large ribosomal subunit protein bL28 of Buchnera aphidicola subsp. Baizongia pistaciae (strain Bp).